A 301-amino-acid polypeptide reads, in one-letter code: Sulfate adenylyltransferase subunit 2 (301 aa).

It belongs to the PAPS reductase family. CysD subfamily. Heterodimer composed of CysD, the smaller subunit, and CysN.

The enzyme catalyses sulfate + ATP + H(+) = adenosine 5'-phosphosulfate + diphosphate. It participates in sulfur metabolism; hydrogen sulfide biosynthesis; sulfite from sulfate: step 1/3. Functionally, with CysN forms the ATP sulfurylase (ATPS) that catalyzes the adenylation of sulfate producing adenosine 5'-phosphosulfate (APS) and diphosphate, the first enzymatic step in sulfur assimilation pathway. APS synthesis involves the formation of a high-energy phosphoric-sulfuric acid anhydride bond driven by GTP hydrolysis by CysN coupled to ATP hydrolysis by CysD. The polypeptide is Sulfate adenylyltransferase subunit 2 (Citrifermentans bemidjiense (strain ATCC BAA-1014 / DSM 16622 / JCM 12645 / Bem) (Geobacter bemidjiensis)).